A 157-amino-acid chain; its full sequence is MNPKVPMTLEGAQQLKEELKRRKTTDRKRIIAAIEEARAHGDLSENAEYHAAKEQQSFNEGRIAKLEGMLASAEVIDTSRLNSSRIVFGAKVTVIDEDTEEESTYHIVGDEEADLEKGKISISSPMARGMIGKEAGDSIEVRAPGGTRHFEVVEITF.

Residues Leu-9–Ile-30 adopt a coiled-coil conformation.

The protein belongs to the GreA/GreB family.

Functionally, necessary for efficient RNA polymerase transcription elongation past template-encoded arresting sites. The arresting sites in DNA have the property of trapping a certain fraction of elongating RNA polymerases that pass through, resulting in locked ternary complexes. Cleavage of the nascent transcript by cleavage factors such as GreA or GreB allows the resumption of elongation from the new 3'terminus. GreA releases sequences of 2 to 3 nucleotides. In Magnetococcus marinus (strain ATCC BAA-1437 / JCM 17883 / MC-1), this protein is Transcription elongation factor GreA.